Reading from the N-terminus, the 470-residue chain is Properdin (470 aa).

The signal sequence occupies residues 1–26; it reads MTAPVQVPQSLLLLLMLLLTLPATGS. TSP type-1 domains are found at residues 27–75, 76–133, 135–190, 192–254, 256–312, 314–376, and 380–463; these read DPVL…QACR, SPRW…QCCP, MGGW…QVCP, HGAW…PPCP, AGGW…VPCP, DGEW…QNCI, and KGSW…PACK. Disulfide bonds link Cys31–Cys55, Cys42–Cys71, and Cys56–Cys74. Residues Trp82 and Trp85 are each glycosylated (C-linked (Man) tryptophan). 7 disulfides stabilise this stretch: Cys88/Cys126, Cys92/Cys132, Cys103/Cys110, Cys131/Cys169, Cys147/Cys183, Cys151/Cys189, and Cys162/Cys173. 3 C-linked (Man) tryptophan glycosylation sites follow: Trp138, Trp141, and Trp144. The O-linked (Fuc...) threonine glycan is linked to Thr150. C-linked (Man) tryptophan glycans are attached at residues Trp195, Trp198, and Trp201. Cystine bridges form between Cys204-Cys247, Cys208-Cys253, and Cys223-Cys237. O-linked (Fuc...) serine glycosylation is present at Ser207. C-linked (Man) tryptophan glycosylation is found at Trp259 and Trp262. Cystine bridges form between Cys268–Cys305, Cys272–Cys311, and Cys283–Cys295. Thr271 carries O-linked (Fuc...) threonine glycosylation. Trp320 and Trp323 each carry a C-linked (Man) tryptophan glycan. Disulfide bonds link Cys326–Cys369, Cys336–Cys375, and Cys349–Cys359. The interaction with Complement C3 beta chain stretch occupies residues 350-358; it reads KGRKFNGQR. C-linked (Man) tryptophan glycans are attached at residues Trp383, Trp386, and Trp389. 3 disulfide bridges follow: Cys392–Cys456, Cys396–Cys462, and Cys408–Cys440. Asn429 carries N-linked (GlcNAc...) asparagine glycosylation.

In plasma, properdin exists as dimers, trimers or tetramers in the relative proportions of 26:54:20. Interacts with the pro-C3-convertase enzyme complex (C3b-Bb) comprised of Complement C3 beta chain (C3b) and the Complement factor B Bb fragment (Bb), where it binds (via its TSP type-1 5 domain) with C3b and Bb. This interaction stabilizes the complex and allows it to become the active C3-convertase enzyme complex (C3b-Bb-FP). Interacts with C3b. Interacts with CFB.

The protein localises to the secreted. Functionally, a positive regulator of the alternate pathway of complement. It binds to and stabilizes the C3- and C5-convertase enzyme complexes. Inhibits CFI-CFH mediated degradation of Inhibits CFI-CFH mediated degradation of Complement C3 beta chain (C3b). This Cavia porcellus (Guinea pig) protein is Properdin (CFP).